We begin with the raw amino-acid sequence, 465 residues long: UDP-N-acetylmuramoylalanine--D-glutamate ligase (465 aa).

ATP is bound at residue 127–133 (GSNGKST).

This sequence belongs to the MurCDEF family.

The protein resides in the cytoplasm. The catalysed reaction is UDP-N-acetyl-alpha-D-muramoyl-L-alanine + D-glutamate + ATP = UDP-N-acetyl-alpha-D-muramoyl-L-alanyl-D-glutamate + ADP + phosphate + H(+). It participates in cell wall biogenesis; peptidoglycan biosynthesis. Its function is as follows. Cell wall formation. Catalyzes the addition of glutamate to the nucleotide precursor UDP-N-acetylmuramoyl-L-alanine (UMA). This Cereibacter sphaeroides (strain ATCC 17023 / DSM 158 / JCM 6121 / CCUG 31486 / LMG 2827 / NBRC 12203 / NCIMB 8253 / ATH 2.4.1.) (Rhodobacter sphaeroides) protein is UDP-N-acetylmuramoylalanine--D-glutamate ligase.